The following is a 1495-amino-acid chain: ESX secretion system protein YukB (1495 aa).

2 consecutive transmembrane segments (helical) span residues 246-266 (LWLV…VAII) and 270-290 (GIFI…STVQ). 2 consecutive FtsK domains span residues 661 to 858 (KDDI…TDSK) and 993 to 1177 (QAPI…SEGY). ATP is bound by residues 682 to 689 (GTTGSGKS) and 1010 to 1017 (GSSGYGKS).

This sequence belongs to the EssC family.

It is found in the cell membrane. Functionally, required for YukE secretion. Probable component or regulator of the ESX/ESAT-6-like secretion system (BsEss). The protein is ESX secretion system protein YukB (yukB) of Bacillus subtilis (strain 168).